A 21-amino-acid chain; its full sequence is Peptide PGLa-R3 (21 aa).

At Leu21 the chain carries Leucine amide.

Expressed by the skin glands.

The protein localises to the secreted. Its function is as follows. Antimicrobial peptide. In Xenopus ruwenzoriensis (Uganda clawed frog), this protein is Peptide PGLa-R3.